The primary structure comprises 364 residues: Aminomethyltransferase (364 aa).

The protein belongs to the GcvT family. In terms of assembly, the glycine cleavage system is composed of four proteins: P, T, L and H.

It carries out the reaction N(6)-[(R)-S(8)-aminomethyldihydrolipoyl]-L-lysyl-[protein] + (6S)-5,6,7,8-tetrahydrofolate = N(6)-[(R)-dihydrolipoyl]-L-lysyl-[protein] + (6R)-5,10-methylene-5,6,7,8-tetrahydrofolate + NH4(+). The glycine cleavage system catalyzes the degradation of glycine. The polypeptide is Aminomethyltransferase (Shewanella denitrificans (strain OS217 / ATCC BAA-1090 / DSM 15013)).